The following is a 98-amino-acid chain: NADH-ubiquinone oxidoreductase chain 4L (98 aa).

3 consecutive transmembrane segments (helical) span residues 1-21 (MMSI…GVLI), 28-48 (STLL…ALLI), and 59-79 (APLV…ALLV).

It belongs to the complex I subunit 4L family. As to quaternary structure, core subunit of respiratory chain NADH dehydrogenase (Complex I) which is composed of 45 different subunits.

It is found in the mitochondrion inner membrane. The enzyme catalyses a ubiquinone + NADH + 5 H(+)(in) = a ubiquinol + NAD(+) + 4 H(+)(out). Functionally, core subunit of the mitochondrial membrane respiratory chain NADH dehydrogenase (Complex I) which catalyzes electron transfer from NADH through the respiratory chain, using ubiquinone as an electron acceptor. Part of the enzyme membrane arm which is embedded in the lipid bilayer and involved in proton translocation. The chain is NADH-ubiquinone oxidoreductase chain 4L (MT-ND4L) from Pseudocheirus peregrinus (Common ring-tailed possum).